A 436-amino-acid chain; its full sequence is Small ribosomal subunit protein uS5m (436 aa).

In terms of domain architecture, S5 DRBM spans 152 to 218; the sequence is FETYCLEVKR…GMASRKLFHV (67 aa). Residues 417–436 form a disordered region; that stretch reads GVEPMPLGIGLSHVVPKKDD.

Belongs to the universal ribosomal protein uS5 family. Component of the mitochondrial ribosome small subunit (28S) which comprises a 12S rRNA and about 30 distinct proteins.

It localises to the mitochondrion. The protein is Small ribosomal subunit protein uS5m (mrps-5) of Caenorhabditis elegans.